The sequence spans 266 residues: 3-methyl-2-oxobutanoate hydroxymethyltransferase 2 (266 aa).

Mg(2+) contacts are provided by aspartate 45 and aspartate 84. 3-methyl-2-oxobutanoate-binding positions include 45-46 (DS), aspartate 84, and lysine 112. Glutamate 114 serves as a coordination point for Mg(2+). Residue glutamate 181 is the Proton acceptor of the active site.

This sequence belongs to the PanB family. As to quaternary structure, homodecamer; pentamer of dimers. Requires Mg(2+) as cofactor.

It is found in the cytoplasm. The enzyme catalyses 3-methyl-2-oxobutanoate + (6R)-5,10-methylene-5,6,7,8-tetrahydrofolate + H2O = 2-dehydropantoate + (6S)-5,6,7,8-tetrahydrofolate. The protein operates within cofactor biosynthesis; (R)-pantothenate biosynthesis; (R)-pantoate from 3-methyl-2-oxobutanoate: step 1/2. In terms of biological role, catalyzes the reversible reaction in which hydroxymethyl group from 5,10-methylenetetrahydrofolate is transferred onto alpha-ketoisovalerate to form ketopantoate. The chain is 3-methyl-2-oxobutanoate hydroxymethyltransferase 2 from Pseudomonas fluorescens (strain ATCC BAA-477 / NRRL B-23932 / Pf-5).